The primary structure comprises 382 residues: Lipid-A-disaccharide synthase (382 aa).

The protein belongs to the LpxB family.

It carries out the reaction a lipid X + a UDP-2-N,3-O-bis[(3R)-3-hydroxyacyl]-alpha-D-glucosamine = a lipid A disaccharide + UDP + H(+). It functions in the pathway bacterial outer membrane biogenesis; LPS lipid A biosynthesis. Condensation of UDP-2,3-diacylglucosamine and 2,3-diacylglucosamine-1-phosphate to form lipid A disaccharide, a precursor of lipid A, a phosphorylated glycolipid that anchors the lipopolysaccharide to the outer membrane of the cell. In Alkalilimnicola ehrlichii (strain ATCC BAA-1101 / DSM 17681 / MLHE-1), this protein is Lipid-A-disaccharide synthase.